Here is an 81-residue protein sequence, read N- to C-terminus: Small ribosomal subunit protein bS18 (81 aa).

Belongs to the bacterial ribosomal protein bS18 family. Part of the 30S ribosomal subunit. Forms a tight heterodimer with protein bS6.

Its function is as follows. Binds as a heterodimer with protein bS6 to the central domain of the 16S rRNA, where it helps stabilize the platform of the 30S subunit. The chain is Small ribosomal subunit protein bS18 from Chloroflexus aurantiacus (strain ATCC 29366 / DSM 635 / J-10-fl).